A 115-amino-acid polypeptide reads, in one-letter code: Small ribosomal subunit protein bS18c (115 aa).

The disordered stretch occupies residues 91-115 (TNALKARTQNKDQKKEKFQINKKKK). The segment covering 99–109 (QNKDQKKEKFQ) has biased composition (basic and acidic residues).

This sequence belongs to the bacterial ribosomal protein bS18 family. Part of the 30S ribosomal subunit.

It is found in the plastid. Its subcellular location is the chloroplast. The polypeptide is Small ribosomal subunit protein bS18c (Ipomoea purpurea (Common morning glory)).